Reading from the N-terminus, the 309-residue chain is Ribosomal RNA small subunit methyltransferase H (309 aa).

S-adenosyl-L-methionine-binding positions include 33–35, D53, F79, D100, and Q107; that span reads GGH.

Belongs to the methyltransferase superfamily. RsmH family.

The protein localises to the cytoplasm. It catalyses the reaction cytidine(1402) in 16S rRNA + S-adenosyl-L-methionine = N(4)-methylcytidine(1402) in 16S rRNA + S-adenosyl-L-homocysteine + H(+). Specifically methylates the N4 position of cytidine in position 1402 (C1402) of 16S rRNA. The polypeptide is Ribosomal RNA small subunit methyltransferase H (Clostridium botulinum (strain Kyoto / Type A2)).